A 502-amino-acid polypeptide reads, in one-letter code: Probable glycine dehydrogenase (decarboxylating) subunit 2 (502 aa).

K273 is modified (N6-(pyridoxal phosphate)lysine).

This sequence belongs to the GcvP family. C-terminal subunit subfamily. In terms of assembly, the glycine cleavage system is composed of four proteins: P, T, L and H. In this organism, the P 'protein' is a heterodimer of two subunits. The cofactor is pyridoxal 5'-phosphate.

The catalysed reaction is N(6)-[(R)-lipoyl]-L-lysyl-[glycine-cleavage complex H protein] + glycine + H(+) = N(6)-[(R)-S(8)-aminomethyldihydrolipoyl]-L-lysyl-[glycine-cleavage complex H protein] + CO2. In terms of biological role, the glycine cleavage system catalyzes the degradation of glycine. The P protein binds the alpha-amino group of glycine through its pyridoxal phosphate cofactor; CO(2) is released and the remaining methylamine moiety is then transferred to the lipoamide cofactor of the H protein. This Thermococcus onnurineus (strain NA1) protein is Probable glycine dehydrogenase (decarboxylating) subunit 2.